Reading from the N-terminus, the 256-residue chain is Homeobox protein goosecoid (256 aa).

Positions 160-219 (KRRHRTIFTDEQLEALENLFQETKYPDVGTREQLARKVHLREEKVEVWFKNRRAKWRRQK) form a DNA-binding region, homeobox. The disordered stretch occupies residues 213 to 256 (AKWRRQKRSSSEESENAEKWNKTSSKASPEKREEEGKSDLDSDS). Residues 240-256 (SPEKREEEGKSDLDSDS) show a composition bias toward basic and acidic residues.

The protein belongs to the paired homeobox family. Bicoid subfamily. As to expression, in early gastrulation, expressed in the dorsal lip. In later stages of development found in head, limbs and body wall. In the embryo, expressed in the postotic cranial neural crest cells, the frontonasal prominence, the first branchial arch and cleft, and specific regions of large joints.

Its subcellular location is the nucleus. Functionally, regulates chordin (CHRD). May play a role in spatial programing within discrete embryonic fields or lineage compartments during organogenesis. In concert with NKX3-2, plays a role in defining the structural components of the middle ear; required for the development of the entire tympanic ring. Goosecoid-expressing regions of the gastrulating mouse egg cylinder have organizer-like activity when transplanted into Xenopus embryos. Probably involved in the regulatory networks that define neural crest cell fate specification and determine mesoderm cell lineages in mammals. The polypeptide is Homeobox protein goosecoid (Gsc) (Mus musculus (Mouse)).